The chain runs to 846 residues: MTQVTVKELAQEVEAPVERLLQQMREAGLPHTDAGQVVTDNEKQTLLTHLKSSHKSKAEEPRKITLQRKTTSTLRVAGSKSISVEVRKKKVFVQRSPEEIQAEQKRELEERRAAENAARDKVEAEVRQRNEEQARRQAAGSTAAAPAPAAKPEPAPAAAPVAAPAPVVADAPASEDAAARAAERKKDETRRNESRTRDDDRRRGEAPRVSIKVKVKEKEKAPTPRAAPRTTDEESDGARRGRGGKSKLKKRNQHGFQNPTGPVIRDVTIGETITVSELANQMSVKGAEVVKFMFKMGTPVTINQVLDQETAQLIAEELGHKVTLVSDTALEDSLAESLKFEGQTESRAPVVTVMGHVDHGKTSLLDYIRRAKVAAGEAGGITQHIGAYHVETDRGMVTFLDTPGHAAFTQMRARGAKATDIVILVVAADDGVMPQTREAVQHAKAAGVPLVVAVNKIDKPGADLDRIRNELSVEGVTSEDWGGDTPFVKVSAKMGTGVDELLEAVLLQAEILELTATPTAPGRGVVVESRLDKGRGPVATILVQDGTLRQGDMVLCGSNYGRVRAMLDENGKPVKEAGPSIPVEILGLDGTPEAGDELSVVADEKKAREVALFRQGKYREVKLARAHAGKLENIFETMGQEEKKTLNIVLKTDVRGSLEALQGSLGGLGNDEVQVRVIGGGVGGITESDANLALASNAVLFGFNVRADAGARKIVEQEGLDMRYYNVIYDIIEDVKKALTGMLGSDVRENILGVAEVRDVFRSPKFGAIAGCMVIEGTVYRNRPIRVLRDDVVIFEGELESLRRFKDDASEVRSGMECGIGVKSYNDVKVGDKIEVFEKVQVARTL.

The disordered stretch occupies residues 94-263 (QRSPEEIQAE…HGFQNPTGPV (170 aa)). The span at 96–135 (SPEEIQAEQKRELEERRAAENAARDKVEAEVRQRNEEQAR) shows a compositional bias: basic and acidic residues. Low complexity-rich tracts occupy residues 136–148 (RQAA…APAP) and 158–176 (AAPV…ASED). Basic and acidic residues-rich tracts occupy residues 177–206 (AAAR…RGEA) and 230–239 (TTDEESDGAR). Residues 240-253 (RGRGGKSKLKKRNQ) are compositionally biased toward basic residues. One can recognise a tr-type G domain in the interval 346 to 513 (SRAPVVTVMG…AVLLQAEILE (168 aa)). The segment at 355–362 (GHVDHGKT) is G1. 355-362 (GHVDHGKT) contributes to the GTP binding site. Positions 380 to 384 (GITQH) are G2. The segment at 401–404 (DTPG) is G3. Residues 401–405 (DTPGH) and 455–458 (NKID) contribute to the GTP site. The tract at residues 455 to 458 (NKID) is G4. The tract at residues 491-493 (SAK) is G5.

It belongs to the TRAFAC class translation factor GTPase superfamily. Classic translation factor GTPase family. IF-2 subfamily.

Its subcellular location is the cytoplasm. Functionally, one of the essential components for the initiation of protein synthesis. Protects formylmethionyl-tRNA from spontaneous hydrolysis and promotes its binding to the 30S ribosomal subunits. Also involved in the hydrolysis of GTP during the formation of the 70S ribosomal complex. This Pseudomonas putida (strain ATCC 700007 / DSM 6899 / JCM 31910 / BCRC 17059 / LMG 24140 / F1) protein is Translation initiation factor IF-2.